The sequence spans 118 residues: Holo-[acyl-carrier-protein] synthase (118 aa).

Mg(2+)-binding residues include Asp-8 and Glu-58.

The protein belongs to the P-Pant transferase superfamily. AcpS family. Requires Mg(2+) as cofactor.

The protein localises to the cytoplasm. It carries out the reaction apo-[ACP] + CoA = holo-[ACP] + adenosine 3',5'-bisphosphate + H(+). Its function is as follows. Transfers the 4'-phosphopantetheine moiety from coenzyme A to a Ser of acyl-carrier-protein. This chain is Holo-[acyl-carrier-protein] synthase, found in Streptococcus pyogenes serotype M1.